The sequence spans 400 residues: Formate-dependent phosphoribosylglycinamide formyltransferase (400 aa).

N(1)-(5-phospho-beta-D-ribosyl)glycinamide-binding positions include E22–L23 and E82. Residues R114, K155, S160–Q165, E195–V198, and E203 each bind ATP. An ATP-grasp domain is found at R119 to L308. The Mg(2+) site is built by E267 and E279. N(1)-(5-phospho-beta-D-ribosyl)glycinamide-binding positions include D286, K356, and R363–R364.

It belongs to the PurK/PurT family. In terms of assembly, homodimer.

It catalyses the reaction N(1)-(5-phospho-beta-D-ribosyl)glycinamide + formate + ATP = N(2)-formyl-N(1)-(5-phospho-beta-D-ribosyl)glycinamide + ADP + phosphate + H(+). It participates in purine metabolism; IMP biosynthesis via de novo pathway; N(2)-formyl-N(1)-(5-phospho-D-ribosyl)glycinamide from N(1)-(5-phospho-D-ribosyl)glycinamide (formate route): step 1/1. Involved in the de novo purine biosynthesis. Catalyzes the transfer of formate to 5-phospho-ribosyl-glycinamide (GAR), producing 5-phospho-ribosyl-N-formylglycinamide (FGAR). Formate is provided by PurU via hydrolysis of 10-formyl-tetrahydrofolate. In Hahella chejuensis (strain KCTC 2396), this protein is Formate-dependent phosphoribosylglycinamide formyltransferase.